Reading from the N-terminus, the 491-residue chain is Probable protein phosphatase 2C 6 (491 aa).

Residues 1 to 16 (MGLCHSKIDKTTRKET) show a composition bias toward basic and acidic residues. The segment at 1 to 39 (MGLCHSKIDKTTRKETGATSTATTTVERQSSGRLRRPRD) is disordered. The span at 17–28 (GATSTATTTVER) shows a compositional bias: low complexity. The PPM-type phosphatase domain occupies 64–376 (IACLYTQQGK…DDCAVVCLFL (313 aa)). Residues Asp100, Gly101, Asp321, and Asp367 each coordinate Mn(2+). A disordered region spans residues 391–422 (VNHSHEESTESVTITSSKDADKKEEASTETNE).

It belongs to the PP2C family. Mg(2+) serves as cofactor. Mn(2+) is required as a cofactor.

The catalysed reaction is O-phospho-L-seryl-[protein] + H2O = L-seryl-[protein] + phosphate. The enzyme catalyses O-phospho-L-threonyl-[protein] + H2O = L-threonyl-[protein] + phosphate. The polypeptide is Probable protein phosphatase 2C 6 (Arabidopsis thaliana (Mouse-ear cress)).